The following is a 504-amino-acid chain: MEEFQRYLELDRFRQHDFLYPLLFREYIYALAHDHGFNSYMLLENIGYDNKSSLLIVKRLITRMYQHNYLMISANDSNQNPFFGYNKNLHSQIISEGFAVIVEIPFSLRLISSFEGAEIVISYKLRSIHSIFPFLEDKLPHLNYTTDVRIPYPIHLEILIQTLRSRVKDASYLHLLRFFLHQYSNWNILIITTKSISIFSKSNPRFFLFLYNSHICQYESIFLFLGNQSSHLRLISSGVLFERLYLHKKIEHFAEVFANDFPVIPCFLKDPFMHYVRYQGKSILASKDTPLLMNKWKYYLVNLWQCHFYVWSHPGRIHINQLSKHSLDFWGYFSSVRLNPSVVRSQMLENSFLINNAPKKLDIIVPIIPLIGSLAKARFCNALGHPISKLTRADLSDFEILNRFLRICRNLSHYYSGSSKKKSMYRIKYILRLSCVKTLARKHKSTARAFLKKVGSEFVQEFFTEEEEFLSLIFPRTSFTLRRLYRGRVWYLDIIFINGLANHE.

It belongs to the intron maturase 2 family. MatK subfamily.

The protein resides in the plastid. The protein localises to the chloroplast. Its function is as follows. Usually encoded in the trnK tRNA gene intron. Probably assists in splicing its own and other chloroplast group II introns. The polypeptide is Maturase K (Fagus japonica (Japanese beech)).